Here is a 289-residue protein sequence, read N- to C-terminus: Myoblast determination protein 1 homolog A (289 aa).

A bHLH domain is found at 95 to 146 (DRRKAATMRERRRLSKVNEAFETLKRYTSTNPNQRLPKVEILRNAIRYIESL). Residues 165-212 (SGDSDASSPRSNCSDGMMDYNSPPCGSRRRNSYDSSFYSDSPNDSRLG) form a disordered region. Polar residues-rich tracts occupy residues 168 to 178 (SDASSPRSNCS) and 197 to 208 (YDSSFYSDSPND).

As to quaternary structure, efficient DNA binding requires dimerization with another bHLH protein.

Its subcellular location is the nucleus. May act as a transcriptional activator that promotes transcription of muscle-specific target genes and plays a role in muscle differentiation. The protein is Myoblast determination protein 1 homolog A (myod1-a) of Xenopus laevis (African clawed frog).